We begin with the raw amino-acid sequence, 147 residues long: Large ribosomal subunit protein uL13 (147 aa).

It belongs to the universal ribosomal protein uL13 family. Part of the 50S ribosomal subunit.

Functionally, this protein is one of the early assembly proteins of the 50S ribosomal subunit, although it is not seen to bind rRNA by itself. It is important during the early stages of 50S assembly. This chain is Large ribosomal subunit protein uL13, found in Beutenbergia cavernae (strain ATCC BAA-8 / DSM 12333 / CCUG 43141 / JCM 11478 / NBRC 16432 / NCIMB 13614 / HKI 0122).